The primary structure comprises 439 residues: Serine hydroxymethyltransferase (439 aa).

The disordered stretch occupies residues 1–20; that stretch reads MNAPHRDETTASHRDDGFFT. (6S)-5,6,7,8-tetrahydrofolate-binding positions include Leu-136 and 140–142; that span reads GHL. Position 245 is an N6-(pyridoxal phosphate)lysine (Lys-245).

The protein belongs to the SHMT family. As to quaternary structure, homodimer. Pyridoxal 5'-phosphate serves as cofactor.

Its subcellular location is the cytoplasm. The catalysed reaction is (6R)-5,10-methylene-5,6,7,8-tetrahydrofolate + glycine + H2O = (6S)-5,6,7,8-tetrahydrofolate + L-serine. Its pathway is one-carbon metabolism; tetrahydrofolate interconversion. It functions in the pathway amino-acid biosynthesis; glycine biosynthesis; glycine from L-serine: step 1/1. Catalyzes the reversible interconversion of serine and glycine with tetrahydrofolate (THF) serving as the one-carbon carrier. This reaction serves as the major source of one-carbon groups required for the biosynthesis of purines, thymidylate, methionine, and other important biomolecules. Also exhibits THF-independent aldolase activity toward beta-hydroxyamino acids, producing glycine and aldehydes, via a retro-aldol mechanism. In Jannaschia sp. (strain CCS1), this protein is Serine hydroxymethyltransferase.